We begin with the raw amino-acid sequence, 221 residues long: GTP cyclohydrolase 1 (221 aa).

3 residues coordinate Zn(2+): Cys-111, His-114, and Cys-182.

This sequence belongs to the GTP cyclohydrolase I family. Homomer.

The enzyme catalyses GTP + H2O = 7,8-dihydroneopterin 3'-triphosphate + formate + H(+). It participates in cofactor biosynthesis; 7,8-dihydroneopterin triphosphate biosynthesis; 7,8-dihydroneopterin triphosphate from GTP: step 1/1. This chain is GTP cyclohydrolase 1, found in Erwinia tasmaniensis (strain DSM 17950 / CFBP 7177 / CIP 109463 / NCPPB 4357 / Et1/99).